A 419-amino-acid polypeptide reads, in one-letter code: UDP-N-acetylglucosamine 1-carboxyvinyltransferase (419 aa).

Residue 22–23 coordinates phosphoenolpyruvate; that stretch reads KN. R93 provides a ligand contact to UDP-N-acetyl-alpha-D-glucosamine. C117 (proton donor) is an active-site residue. C117 carries the 2-(S-cysteinyl)pyruvic acid O-phosphothioketal modification. The UDP-N-acetyl-alpha-D-glucosamine site is built by D307 and I329.

Belongs to the EPSP synthase family. MurA subfamily.

The protein localises to the cytoplasm. The enzyme catalyses phosphoenolpyruvate + UDP-N-acetyl-alpha-D-glucosamine = UDP-N-acetyl-3-O-(1-carboxyvinyl)-alpha-D-glucosamine + phosphate. It participates in cell wall biogenesis; peptidoglycan biosynthesis. Functionally, cell wall formation. Adds enolpyruvyl to UDP-N-acetylglucosamine. This is UDP-N-acetylglucosamine 1-carboxyvinyltransferase from Shewanella woodyi (strain ATCC 51908 / MS32).